The following is a 178-amino-acid chain: ATP synthase subunit b (178 aa).

Residues 19–39 traverse the membrane as a helical segment; sequence ITGIGFVILLFIAIKYIVPAF.

Belongs to the ATPase B chain family. In terms of assembly, F-type ATPases have 2 components, F(1) - the catalytic core - and F(0) - the membrane proton channel. F(1) has five subunits: alpha(3), beta(3), gamma(1), delta(1), epsilon(1). F(0) has three main subunits: a(1), b(2) and c(10-14). The alpha and beta chains form an alternating ring which encloses part of the gamma chain. F(1) is attached to F(0) by a central stalk formed by the gamma and epsilon chains, while a peripheral stalk is formed by the delta and b chains.

It localises to the cell membrane. Its function is as follows. F(1)F(0) ATP synthase produces ATP from ADP in the presence of a proton or sodium gradient. F-type ATPases consist of two structural domains, F(1) containing the extramembraneous catalytic core and F(0) containing the membrane proton channel, linked together by a central stalk and a peripheral stalk. During catalysis, ATP synthesis in the catalytic domain of F(1) is coupled via a rotary mechanism of the central stalk subunits to proton translocation. Functionally, component of the F(0) channel, it forms part of the peripheral stalk, linking F(1) to F(0). The protein is ATP synthase subunit b of Kocuria rhizophila (strain ATCC 9341 / DSM 348 / NBRC 103217 / DC2201).